The sequence spans 309 residues: Mannitol-1-phosphatase (309 aa).

His-82 serves as the catalytic Tele-phosphohistidine intermediate. Glu-166 functions as the Proton donor/acceptor in the catalytic mechanism.

This sequence belongs to the phosphoglycerate mutase family.

The enzyme catalyses D-mannitol 1-phosphate + H2O = D-mannitol + phosphate. Its activity is regulated as follows. By diethyl pyrocarbonate (DEPC). Key enzyme for mannitol biosynthesis. The polypeptide is Mannitol-1-phosphatase (Eimeria tenella (Coccidian parasite)).